The primary structure comprises 245 residues: Short-chain dehydrogenase/reductase pyiH (245 aa).

Positions 18, 42, 68, and 95 each coordinate NADP(+). The Proton donor role is filled by S150.

This sequence belongs to the short-chain dehydrogenases/reductases (SDR) family.

It functions in the pathway mycotoxin biosynthesis. Short-chain dehydrogenase/reductase; part of the gene cluster that mediates the biosynthesis of the mycotoxin pyrichalasin H, a tyrosine-derived cytochalasan that inhibits the growth of rice seedlings, but also inhibits lymphocyte capping and actin polymerization and alters cell morphology. Pyrichalasin H is indicated as the responsible agent for the genus-specific pathogenicity of M.grisea toward crabgrass. The first step in the pathway is catalyzed by the O-methyltransferase pyiA which methylates free tyrosine to generate the precursor O-methyltyrosine. The hybrid PKS-NRPS pyiS, assisted by the enoyl reductase pyiC, are responsible for fusion of the O-methyltyrosine precursor and the polyketide backbone. The polyketide synthase module (PKS) of pyiS is responsible for the synthesis of the polyketide backbone and the downstream nonribosomal peptide synthetase (NRPS) amidates the carboxyl end of the polyketide with the O-methyltyrosine precursor. As the NRPS A-domain demonstrates substrate tolerance, pyiS can also use phenylalanine, tyrosine and even para-chlorophenylalanine as amino acid precursor, which leads to the production of novel cytochalasans, including halogenated cytochalasans. Because pyiS lacks a designated enoylreductase (ER) domain, the required activity is provided the enoyl reductase pyiC. Reduction by the hydrolyase pyiE leads to 1,5-dihydropyrrolone, which is substrate for dehydration and intra-molecular Diels-Alder cyclization by the Diels-Alderase pyiF to yield the required isoindolone-fused macrocycle. The tailoring cytochrome P450 monooxygenases piyD and piyG catalyze the hydroxylation at C-18 and C-7, respectivily, whereas the short-chain dehydrogenase/reductase pyiH reduces the carbonyl at C-21 in preparation for the transfer of an acetyl group by the acetyltransferase pyiB. These 3 reactions whose order is not clear yet, lead to the production of O-methylpyrichalasin J, a deacetylated pyrichalasin H. Finally, pyiB to converts O-methylpyrichalasin J into the final product pyrichalasin H via acetylation of C-21. This Pyricularia grisea (Crabgrass-specific blast fungus) protein is Short-chain dehydrogenase/reductase pyiH.